Reading from the N-terminus, the 156-residue chain is Jun dimerization protein 2 (156 aa).

The disordered stretch occupies residues 56–95 (KRPFDAIKSEDDDDDERKKRRREKNKVAAARCRNRKKERT). Residues 70–133 (DERKKRRREK…QQLIVMLNLH (64 aa)) enclose the bZIP domain. Positions 72–94 (RKKRRREKNKVAAARCRNRKKER) are basic motif. The segment at 98–126 (LQKESERLEMLNSDLKSQIEELKSERQQL) is leucine-zipper.

Belongs to the bZIP family. ATF subfamily.

Its subcellular location is the nucleus. Functionally, component of the AP-1 transcription factor that represses transactivation mediated by the Jun family of proteins. The polypeptide is Jun dimerization protein 2 (jdp2) (Danio rerio (Zebrafish)).